A 118-amino-acid polypeptide reads, in one-letter code: Large ribosomal subunit protein bL20 (118 aa).

This sequence belongs to the bacterial ribosomal protein bL20 family.

Binds directly to 23S ribosomal RNA and is necessary for the in vitro assembly process of the 50S ribosomal subunit. It is not involved in the protein synthesizing functions of that subunit. The polypeptide is Large ribosomal subunit protein bL20 (Aeromonas hydrophila subsp. hydrophila (strain ATCC 7966 / DSM 30187 / BCRC 13018 / CCUG 14551 / JCM 1027 / KCTC 2358 / NCIMB 9240 / NCTC 8049)).